The following is a 707-amino-acid chain: DNA ligase (707 aa).

NAD(+) is bound by residues 36 to 40, 85 to 86, and E116; these read DADFD and SL. The active-site N6-AMP-lysine intermediate is the K118. The NAD(+) site is built by R139, E180, K298, and K322. Zn(2+) is bound by residues C416, C419, C434, and C440. The region spanning 613 to 707 is the BRCT domain; the sequence is AASSKIAGRS…STHVDPERMV (95 aa).

Belongs to the NAD-dependent DNA ligase family. LigA subfamily. Requires Mg(2+) as cofactor. Mn(2+) is required as a cofactor.

The enzyme catalyses NAD(+) + (deoxyribonucleotide)n-3'-hydroxyl + 5'-phospho-(deoxyribonucleotide)m = (deoxyribonucleotide)n+m + AMP + beta-nicotinamide D-nucleotide.. In terms of biological role, DNA ligase that catalyzes the formation of phosphodiester linkages between 5'-phosphoryl and 3'-hydroxyl groups in double-stranded DNA using NAD as a coenzyme and as the energy source for the reaction. It is essential for DNA replication and repair of damaged DNA. The sequence is that of DNA ligase from Nitrosospira multiformis (strain ATCC 25196 / NCIMB 11849 / C 71).